The primary structure comprises 37 residues: Photosystem II reaction center protein M (37 aa).

A helical transmembrane segment spans residues 7–27; it reads GFIAVLMFLAIPTAFLLIPYV.

The protein belongs to the PsbM family. PSII is composed of 1 copy each of membrane proteins PsbA, PsbB, PsbC, PsbD, PsbE, PsbF, PsbH, PsbI, PsbJ, PsbK, PsbL, PsbM, PsbT, PsbX, PsbY, PsbZ, Psb30/Ycf12, at least 3 peripheral proteins of the oxygen-evolving complex and a large number of cofactors. It forms dimeric complexes.

It is found in the plastid. The protein resides in the chloroplast thylakoid membrane. In terms of biological role, one of the components of the core complex of photosystem II (PSII). PSII is a light-driven water:plastoquinone oxidoreductase that uses light energy to abstract electrons from H(2)O, generating O(2) and a proton gradient subsequently used for ATP formation. It consists of a core antenna complex that captures photons, and an electron transfer chain that converts photonic excitation into a charge separation. This subunit is found at the monomer-monomer interface. The chain is Photosystem II reaction center protein M from Pinus koraiensis (Korean pine).